We begin with the raw amino-acid sequence, 124 residues long: Large ribosomal subunit protein bL12 (124 aa).

This sequence belongs to the bacterial ribosomal protein bL12 family. Homodimer. Part of the ribosomal stalk of the 50S ribosomal subunit. Forms a multimeric L10(L12)X complex, where L10 forms an elongated spine to which 2 to 4 L12 dimers bind in a sequential fashion. Binds GTP-bound translation factors.

Forms part of the ribosomal stalk which helps the ribosome interact with GTP-bound translation factors. Is thus essential for accurate translation. The polypeptide is Large ribosomal subunit protein bL12 (Bacteroides thetaiotaomicron (strain ATCC 29148 / DSM 2079 / JCM 5827 / CCUG 10774 / NCTC 10582 / VPI-5482 / E50)).